Here is a 386-residue protein sequence, read N- to C-terminus: Glucose-1-phosphate adenylyltransferase (386 aa).

Alpha-D-glucose 1-phosphate is bound by residues Tyr-100, Gly-165, 180 to 181 (EK), and Ser-191.

It belongs to the bacterial/plant glucose-1-phosphate adenylyltransferase family. In terms of assembly, homotetramer.

The catalysed reaction is alpha-D-glucose 1-phosphate + ATP + H(+) = ADP-alpha-D-glucose + diphosphate. The protein operates within glycan biosynthesis; glycogen biosynthesis. In terms of biological role, involved in the biosynthesis of ADP-glucose, a building block required for the elongation reactions to produce glycogen. Catalyzes the reaction between ATP and alpha-D-glucose 1-phosphate (G1P) to produce pyrophosphate and ADP-Glc. This is Glucose-1-phosphate adenylyltransferase from Clostridium botulinum (strain Eklund 17B / Type B).